A 127-amino-acid chain; its full sequence is Aspartate 1-decarboxylase (127 aa).

Serine 25 (schiff-base intermediate with substrate; via pyruvic acid) is an active-site residue. Residue serine 25 is modified to Pyruvic acid (Ser). Threonine 57 contacts substrate. The Proton donor role is filled by tyrosine 58. Substrate is bound at residue 73–75 (GAA).

This sequence belongs to the PanD family. In terms of assembly, heterooctamer of four alpha and four beta subunits. Pyruvate serves as cofactor. In terms of processing, is synthesized initially as an inactive proenzyme, which is activated by self-cleavage at a specific serine bond to produce a beta-subunit with a hydroxyl group at its C-terminus and an alpha-subunit with a pyruvoyl group at its N-terminus.

It is found in the cytoplasm. The catalysed reaction is L-aspartate + H(+) = beta-alanine + CO2. It functions in the pathway cofactor biosynthesis; (R)-pantothenate biosynthesis; beta-alanine from L-aspartate: step 1/1. In terms of biological role, catalyzes the pyruvoyl-dependent decarboxylation of aspartate to produce beta-alanine. This chain is Aspartate 1-decarboxylase, found in Neisseria meningitidis serogroup B (strain ATCC BAA-335 / MC58).